A 236-amino-acid polypeptide reads, in one-letter code: Small ribosomal subunit protein uS2c (236 aa).

This sequence belongs to the universal ribosomal protein uS2 family.

It is found in the plastid. The protein localises to the chloroplast. This is Small ribosomal subunit protein uS2c (rps2) from Olimarabidopsis pumila (Dwarf rocket).